The sequence spans 69 residues: Rubredoxin-1 (69 aa).

The Rubredoxin-like domain maps to 14–69; sequence QASWMCAECGYIYDPAEGNLETNIRPGMPFDKLPDDWSCPVCNHPKNQFTKFISQL. Fe cation-binding residues include Cys-19, Cys-22, Cys-52, and Cys-55.

Belongs to the rubredoxin family. Monomer. Fe(3+) is required as a cofactor.

Functionally, serves as an electron acceptor for pyruvate ferredoxin oxidoreductase (PFOR). The protein is Rubredoxin-1 (rub1) of Chlorobaculum tepidum (strain ATCC 49652 / DSM 12025 / NBRC 103806 / TLS) (Chlorobium tepidum).